The following is a 72-amino-acid chain: Translation initiation factor IF-1 (72 aa).

The 72-residue stretch at 1-72 (MSKDDVIEID…DKGRITYRYK (72 aa)) folds into the S1-like domain.

The protein belongs to the IF-1 family. In terms of assembly, component of the 30S ribosomal translation pre-initiation complex which assembles on the 30S ribosome in the order IF-2 and IF-3, IF-1 and N-formylmethionyl-tRNA(fMet); mRNA recruitment can occur at any time during PIC assembly.

It is found in the cytoplasm. Functionally, one of the essential components for the initiation of protein synthesis. Stabilizes the binding of IF-2 and IF-3 on the 30S subunit to which N-formylmethionyl-tRNA(fMet) subsequently binds. Helps modulate mRNA selection, yielding the 30S pre-initiation complex (PIC). Upon addition of the 50S ribosomal subunit IF-1, IF-2 and IF-3 are released leaving the mature 70S translation initiation complex. The sequence is that of Translation initiation factor IF-1 from Campylobacter hominis (strain ATCC BAA-381 / DSM 21671 / CCUG 45161 / LMG 19568 / NCTC 13146 / CH001A).